Reading from the N-terminus, the 188-residue chain is Putative ankyrin repeat protein FPV230 (188 aa).

ANK repeat units lie at residues 2 to 31 (ENELKLYYAVSSQNENLVIQLLNKGYNPNA), 36 to 65 (KYMIPLHKAVECRNVDITKHLLSNGADANV), 135 to 164 (LGSTPLHIASKYNNKTMVKFFLERGADINI), and 168 to 187 (NNNTPLIYAVCSVIRLYLKC).

In Vertebrata (FPV), this protein is Putative ankyrin repeat protein FPV230.